The primary structure comprises 952 residues: Substrate-adhesion molecule (952 aa).

An N-terminal signal peptide occupies residues 1 to 25 (MKSQKIGSMILLIGILLAIFNFAYS). The Extracellular segment spans residues 26–527 (DDDIERFSIN…TWFFDTNVET (502 aa)). 5 N-linked (GlcNAc...) asparagine glycosylation sites follow: N78, N182, N231, N243, and N412. Residues 438-471 (EIRRCKDSCNGYGTCNTANYTCVCDSAHMGETCN) form the EGF-like domain. Cystine bridges form between C442/C452, C446/C459, and C461/C470. Residue N456 is glycosylated (N-linked (GlcNAc...) asparagine). A helical membrane pass occupies residues 528 to 548 (GVIALACIFIAFVGILYIIDI). Residues 549-591 (GTTVPIDIKRAKDYAEENKSGQFPKATHEEASVLWWRDQRSHK) lie on the Cytoplasmic side of the membrane. A helical transmembrane segment spans residues 592 to 612 (AWTFMDQFQLISLVSHIGVVF). The Extracellular portion of the chain corresponds to 613–678 (PSRFISFTEY…GDLYLLPNIL (66 aa)). The helical transmembrane segment at 679 to 699 (FWFGLLLGVFLVPLLLAYAII) threads the bilayer. Over 700–722 (SFMESLIHWKEVVTNRLIHVLVR) the chain is Cytoplasmic. Residues 723–743 (ILTFGYIGVLIAASFAMVTPL) traverse the membrane as a helical segment. Residues 744 to 752 (HDYRIIIPG) are Extracellular-facing. A helical transmembrane segment spans residues 753–773 (AIIFVLYGIGLPIAIWFLLAV). At 774-801 (PEARLHNPTFKQRFGCLYVHYKPKTDHR) the chain is on the cytoplasmic side. The helical transmembrane segment at 802-822 (FVVFMFIKRFIMAVIIGILSF) threads the bilayer. Over 823-837 (KPMTNYPLTGTDLAV) the chain is Extracellular. Residues 838–858 (PIVQVVVIDIALIGYAVLLFI) traverse the membrane as a helical segment. Over 859–868 (RKPYFDHYQL) the chain is Cytoplasmic. A helical membrane pass occupies residues 869-889 (WLEYLLTAINIVTVSLSLTHI). Residues 890–897 (KSPSAAGE) lie on the Extracellular side of the membrane. A helical transmembrane segment spans residues 898–918 (LIACLIQALALVACIAAYVVA). Topologically, residues 919 to 952 (WLQMRSSFIKKVKKYLCCCCKSSKSSGEIDLSKK) are cytoplasmic.

Its subcellular location is the cell membrane. Functionally, involved in substrate adhesion, myosin-independent cytokinesis, organization of actin cytoskeleton, and phagocytosis. In Dictyostelium discoideum (Social amoeba), this protein is Substrate-adhesion molecule (sadA).